A 129-amino-acid chain; its full sequence is Small ribosomal subunit protein uS11 (129 aa).

It belongs to the universal ribosomal protein uS11 family. In terms of assembly, part of the 30S ribosomal subunit. Interacts with proteins S7 and S18. Binds to IF-3.

In terms of biological role, located on the platform of the 30S subunit, it bridges several disparate RNA helices of the 16S rRNA. Forms part of the Shine-Dalgarno cleft in the 70S ribosome. The chain is Small ribosomal subunit protein uS11 from Salmonella newport (strain SL254).